A 273-amino-acid polypeptide reads, in one-letter code: Ribosomal RNA small subunit methyltransferase A (273 aa).

Positions 20, 22, 47, 68, 90, and 110 each coordinate S-adenosyl-L-methionine.

This sequence belongs to the class I-like SAM-binding methyltransferase superfamily. rRNA adenine N(6)-methyltransferase family. RsmA subfamily.

It is found in the cytoplasm. The catalysed reaction is adenosine(1518)/adenosine(1519) in 16S rRNA + 4 S-adenosyl-L-methionine = N(6)-dimethyladenosine(1518)/N(6)-dimethyladenosine(1519) in 16S rRNA + 4 S-adenosyl-L-homocysteine + 4 H(+). Specifically dimethylates two adjacent adenosines (A1518 and A1519) in the loop of a conserved hairpin near the 3'-end of 16S rRNA in the 30S particle. May play a critical role in biogenesis of 30S subunits. The sequence is that of Ribosomal RNA small subunit methyltransferase A from Chlorobium luteolum (strain DSM 273 / BCRC 81028 / 2530) (Pelodictyon luteolum).